A 420-amino-acid polypeptide reads, in one-letter code: MYSPEEAAELKRRNYRSIREMIRLSYTVGFNLLDPSRCGQVLRIWTIVLSVSSLASLYGHWQMLARYIHDIPRIGETAGTALQFLTSIAKMWYFLFAHRQIYELLRKARCHELLQKCELFERMSDLPVIKEIRQQVESTMNRYWASTRRQILIYLYSCICITTNYFINSFVINLYRYFTKPKGSYDIMLPLPSLYPAWEHKGLEFPYYHIQMYLETCSLYICGMCAVSFDGVFIVLCLHSVGLMRSLNQMVEQATSELVPPDRRVEYLRCCIYQYQRVANFATEVNNCFRHITFTQFLLSLFNWGLALFQMSVGLGNNSSITMIRMTMYLVAAGYQIVVYCYNGQRFATASEEIANAFYQVRWYGESREFRHLIRMMLMRTNRGFRLDVSWFMQMSLPTLMAMVRTSGQYFLLLQNVNQK.

Over 1 to 43 (MYSPEEAAELKRRNYRSIREMIRLSYTVGFNLLDPSRCGQVLR) the chain is Cytoplasmic. Residues 44 to 64 (IWTIVLSVSSLASLYGHWQML) traverse the membrane as a helical segment. Topologically, residues 65-76 (ARYIHDIPRIGE) are extracellular. A helical membrane pass occupies residues 77–97 (TAGTALQFLTSIAKMWYFLFA). Residues 98-150 (HRQIYELLRKARCHELLQKCELFERMSDLPVIKEIRQQVESTMNRYWASTRRQ) lie on the Cytoplasmic side of the membrane. Residues 151-171 (ILIYLYSCICITTNYFINSFV) form a helical membrane-spanning segment. Residues 172–217 (INLYRYFTKPKGSYDIMLPLPSLYPAWEHKGLEFPYYHIQMYLETC) lie on the Extracellular side of the membrane. Residues 218–238 (SLYICGMCAVSFDGVFIVLCL) form a helical membrane-spanning segment. At 239 to 296 (HSVGLMRSLNQMVEQATSELVPPDRRVEYLRCCIYQYQRVANFATEVNNCFRHITFTQ) the chain is on the cytoplasmic side. The helical transmembrane segment at 297–317 (FLLSLFNWGLALFQMSVGLGN) threads the bilayer. A glycan (N-linked (GlcNAc...) asparagine) is linked at asparagine 318. Over 318 to 320 (NSS) the chain is Extracellular. The helical transmembrane segment at 321–341 (ITMIRMTMYLVAAGYQIVVYC) threads the bilayer. Residues 342-387 (YNGQRFATASEEIANAFYQVRWYGESREFRHLIRMMLMRTNRGFRL) are Cytoplasmic-facing. Residues 388-408 (DVSWFMQMSLPTLMAMVRTSG) form a helical membrane-spanning segment. The Extracellular portion of the chain corresponds to 409–420 (QYFLLLQNVNQK).

It belongs to the insect chemoreceptor superfamily. Heteromeric odorant receptor channel (TC 1.A.69) family. Or63a subfamily. In terms of assembly, interacts with Orco. Complexes exist early in the endomembrane system in olfactory sensory neurons (OSNs), coupling these complexes to the conserved ciliary trafficking pathway.

It localises to the cell membrane. Its function is as follows. Odorant receptor which mediates acceptance or avoidance behavior, depending on its substrates. The odorant receptor repertoire encodes a large collection of odor stimuli that vary widely in identity, intensity, and duration. May form a complex with Orco to form odorant-sensing units, providing sensitive and prolonged odorant signaling and calcium permeability. Involved in the behavioral responses to butyl acetate, isoamyl acetate, and hexanoic acid. The sequence is that of Odorant receptor 63a (Or63a) from Drosophila melanogaster (Fruit fly).